A 158-amino-acid polypeptide reads, in one-letter code: Small ribosomal subunit protein uS9 (158 aa).

It belongs to the universal ribosomal protein uS9 family.

In Brucella canis (strain ATCC 23365 / NCTC 10854 / RM-666), this protein is Small ribosomal subunit protein uS9.